We begin with the raw amino-acid sequence, 101 residues long: Urease subunit beta (101 aa).

It belongs to the urease beta subunit family. In terms of assembly, heterotrimer of UreA (gamma), UreB (beta) and UreC (alpha) subunits. Three heterotrimers associate to form the active enzyme.

The protein localises to the cytoplasm. It catalyses the reaction urea + 2 H2O + H(+) = hydrogencarbonate + 2 NH4(+). Its pathway is nitrogen metabolism; urea degradation; CO(2) and NH(3) from urea (urease route): step 1/1. The sequence is that of Urease subunit beta from Rhizobium etli (strain ATCC 51251 / DSM 11541 / JCM 21823 / NBRC 15573 / CFN 42).